Reading from the N-terminus, the 689-residue chain is Glycine--tRNA ligase beta subunit (689 aa).

It belongs to the class-II aminoacyl-tRNA synthetase family. Tetramer of two alpha and two beta subunits.

It is found in the cytoplasm. The catalysed reaction is tRNA(Gly) + glycine + ATP = glycyl-tRNA(Gly) + AMP + diphosphate. The polypeptide is Glycine--tRNA ligase beta subunit (Citrobacter koseri (strain ATCC BAA-895 / CDC 4225-83 / SGSC4696)).